The following is a 430-amino-acid chain: Histidinol dehydrogenase (430 aa).

Residues Y130, Q191, and N214 each contribute to the NAD(+) site. S237, Q259, and H262 together coordinate substrate. Zn(2+)-binding residues include Q259 and H262. Residues E327 and H328 each act as proton acceptor in the active site. Substrate-binding residues include H328, D361, E415, and H420. D361 contacts Zn(2+). H420 is a binding site for Zn(2+).

Belongs to the histidinol dehydrogenase family. Zn(2+) serves as cofactor.

It carries out the reaction L-histidinol + 2 NAD(+) + H2O = L-histidine + 2 NADH + 3 H(+). It participates in amino-acid biosynthesis; L-histidine biosynthesis; L-histidine from 5-phospho-alpha-D-ribose 1-diphosphate: step 9/9. Its function is as follows. Catalyzes the sequential NAD-dependent oxidations of L-histidinol to L-histidinaldehyde and then to L-histidine. The chain is Histidinol dehydrogenase (hisD) from Zymomonas mobilis subsp. mobilis (strain ATCC 31821 / ZM4 / CP4).